Reading from the N-terminus, the 623-residue chain is (-)-alpha-pinene synthase 1, chloroplastic (623 aa).

The N-terminal 52 residues, 1 to 52, are a transit peptide targeting the chloroplast; it reads MDLISVLPSASKSCVCLHKPLSSSTHKLKPFCKTIRILGMPRRWKFAGPSMS. Mg(2+) contacts are provided by Asp-374, Asp-378, and Asp-526. Positions 374–378 match the DDXXD motif motif; sequence DDMYD.

It belongs to the terpene synthase family. Tpsd subfamily. Mg(2+) is required as a cofactor. Mn(2+) serves as cofactor.

The protein resides in the plastid. Its subcellular location is the chloroplast. The enzyme catalyses (2E)-geranyl diphosphate = (1S,5S)-alpha-pinene + diphosphate. It carries out the reaction (2E)-geranyl diphosphate = (1S,5S)-beta-pinene + diphosphate. The catalysed reaction is (2E)-geranyl diphosphate = (-)-beta-phellandrene + diphosphate. The protein operates within terpene metabolism; oleoresin biosynthesis. It functions in the pathway secondary metabolite biosynthesis; terpenoid biosynthesis. In terms of biological role, monoterpene synthase (TPS) involved in the biosynthesis of monoterpene natural products included in conifer oleoresin secretions and volatile emissions; these compounds contribute to biotic and abiotic stress defense against herbivores and pathogens. Catalyzes the conversion of (2E)-geranyl diphosphate (GPP) to (-)-alpha-pinene and (-)-beta-pinene, and, to a lower extent, to (-)-beta-phellandrene. In Pinus banksiana (Jack pine), this protein is (-)-alpha-pinene synthase 1, chloroplastic.